A 285-amino-acid polypeptide reads, in one-letter code: Complement C1q tumor necrosis factor-related protein 2 (285 aa).

Residues M1–A15 form the signal peptide. Positions Q33–G144 are disordered. The Collagen-like domain occupies G40–C141. The segment covering P41–P51 has biased composition (pro residues). A compositionally biased stretch (low complexity) spans P53 to K65. Over residues D66 to S78 the composition is skewed to basic and acidic residues. Residues P84–H120 show a composition bias toward low complexity. One can recognise a C1q domain in the interval S145–D281.

As to quaternary structure, may interact with ERFE. In terms of tissue distribution, expressed in adipose tissue.

Its subcellular location is the secreted. In terms of biological role, involved in the regulation of lipid metabolism in adipose tissue and liver. The polypeptide is Complement C1q tumor necrosis factor-related protein 2 (C1QTNF2) (Homo sapiens (Human)).